The sequence spans 292 residues: MKGTIIKGIGGFYYIKIDNSEEIIECKARGKFRHTELTPMIGDYVEISIDKNNKGAIEKIYERRSELFRPAVANVTQALVVFSFKNPDINIDLLNKFLLLCEYNNLKAIVCFNKMDLVNKEDYKDIISMIEQAGYDIIFLNAKEERNMDIIKKLIKDNVTVFCGPSGVGKSTMLNKIIGKETMITGNISEKLKRGKHTTRHSELIYVDEGLLVDTPGFSSLDINFMEKEDLLHCIPEFRDFIGECKFTGCLHHREPNCAVKKAVEEGHIHKNRYDFYIKTLEEFMNRRKKKW.

The CP-type G domain occupies 64-221; that stretch reads RSELFRPAVA…LVDTPGFSSL (158 aa). Residues 113–116 and 164–172 contribute to the GTP site; these read NKMD and GPSGVGKST. Zn(2+) contacts are provided by C245, C250, H252, and C258.

Belongs to the TRAFAC class YlqF/YawG GTPase family. RsgA subfamily. In terms of assembly, monomer. Associates with 30S ribosomal subunit, binds 16S rRNA. It depends on Zn(2+) as a cofactor.

It is found in the cytoplasm. Its function is as follows. One of several proteins that assist in the late maturation steps of the functional core of the 30S ribosomal subunit. Helps release RbfA from mature subunits. May play a role in the assembly of ribosomal proteins into the subunit. Circularly permuted GTPase that catalyzes slow GTP hydrolysis, GTPase activity is stimulated by the 30S ribosomal subunit. In Clostridium botulinum (strain Kyoto / Type A2), this protein is Small ribosomal subunit biogenesis GTPase RsgA.